The chain runs to 237 residues: MTNTTSPAILNPIARPEVPQELAENIILTSLNDVYDWARLSSLWPLMYGTACCFIEFAAMIGSRFDFDRFGLVPRNSPRQADLIITSGTITMKMAPALVRLYEQMPSPKYVIAMGACTITGGMFSSDSYSAVRGVDKLIPVDVYLPGCPPRPEAIMDAIVKLRKKIANEHINERGNLAQTHRLFTAKHKMKPVPPILTGQYLNAPSRQAPPPALAAAMGIAVPALGEAVSETTSVAE.

[4Fe-4S] cluster contacts are provided by cysteine 52, cysteine 53, cysteine 117, and cysteine 148.

The protein belongs to the complex I 20 kDa subunit family. As to quaternary structure, NDH-1 can be composed of about 15 different subunits; different subcomplexes with different compositions have been identified which probably have different functions. Requires [4Fe-4S] cluster as cofactor.

Its subcellular location is the cellular thylakoid membrane. The catalysed reaction is a plastoquinone + NADH + (n+1) H(+)(in) = a plastoquinol + NAD(+) + n H(+)(out). It catalyses the reaction a plastoquinone + NADPH + (n+1) H(+)(in) = a plastoquinol + NADP(+) + n H(+)(out). In terms of biological role, NDH-1 shuttles electrons from an unknown electron donor, via FMN and iron-sulfur (Fe-S) centers, to quinones in the respiratory and/or the photosynthetic chain. The immediate electron acceptor for the enzyme in this species is believed to be plastoquinone. Couples the redox reaction to proton translocation, and thus conserves the redox energy in a proton gradient. Cyanobacterial NDH-1 also plays a role in inorganic carbon-concentration. In Thermosynechococcus vestitus (strain NIES-2133 / IAM M-273 / BP-1), this protein is NAD(P)H-quinone oxidoreductase subunit K.